We begin with the raw amino-acid sequence, 190 residues long: R46 site-specific recombinase (190 aa).

The region spanning 2–137 (RLFGYARVST…EGRQEAKLKG (136 aa)) is the Resolvase/invertase-type recombinase catalytic domain. The active-site O-(5'-phospho-DNA)-serine intermediate is S10. A DNA-binding region (H-T-H motif) is located at residues 161–180 (ATDIARRLSIARSTVYKILE).

Belongs to the site-specific recombinase resolvase family.

In terms of biological role, site-specific recombination protein. In Escherichia coli, this protein is R46 site-specific recombinase (tnpR).